The following is a 243-amino-acid chain: HTH-type transcriptional regulator MlrA (243 aa).

One can recognise an HTH merR-type domain in the interval 3–72; that stretch reads LYTIGEVALL…VSKVKMLLSN (70 aa). The segment at residues 6 to 25 is a DNA-binding region (H-T-H motif); sequence IGEVALLCDINPVTLRAWQR.

In terms of assembly, interacts with DgcM and PdeR.

With respect to regulation, activity is regulated by DgcM and PdeR. Functionally, activates transcription of csgD, the master regulator of biofilm formation, by binding to its promoter region. Also controls the transcription of cadC and ibaG. Part of a signaling cascade that regulates curli biosynthesis. The cascade is composed of two c-di-GMP control modules, in which c-di-GMP controlled by the DgcE/PdeH pair (module I) regulates the activity of the DgcM/PdeR pair (module II), which in turn regulates activity of the transcription factor MlrA. This is HTH-type transcriptional regulator MlrA from Escherichia coli (strain K12).